The sequence spans 600 residues: MSSISMHAGPLNISAANNHHPSWDRRVSKPRRVAAKHLRLRLSCSLQLDGKPLDETRRSANYQPSAWDFNFIQSLHNQYKEDKYVTRHTELTAQVKMLLEEETDAVQQLDLIEDLKNLGINYLFKDKIQQILNHIYNQHRCFQNNQVEGNDLYFTALGFRLLRQHGFEVSQEVFDRFTNEEGTDFNPSLIDDTKGLLQLYEASFLLREGEDTLELARQFSTKLLQKKVDEDGDREVGDNLLVWIRHSLELPLHWRIHRIEARWFLDAYATRHDMNPIIFELAKLDFNITQATQQEELRDLSRWWNSAGLVEKLSFARDRVVESYFWAIGTLEPRQYGYQRKLVAKIIALISVVDDVYDIYGTLDELKLFTDVMRRWDAESFDQLPYYMKICYLIINNFIFELAYDILKDKGFNSLSYLQRSWLDVVEGYFTEAKWYYSGYTPNLEEYLKNAKITVTCPMILSQIYFTIASSIEKPELESMYKYHDILYLSGLLLRLPDDLGTALHELKRGDVPKAMQCYMKEKNVPEKEAREHVRFLIREASKQMNTVSAADCPFPDDFVAAAANLGRVANFVYVDGDGFGDQHSKMLQQIAALMFEPYD.

The segment at M1–V27 is disordered. Residues M1–R31 constitute a chloroplast transit peptide. The Mg(2+) site is built by D354, D358, D498, and E506. Positions D354–D358 match the DDXXD motif motif.

It belongs to the terpene synthase family. Tpsa subfamily. Mg(2+) serves as cofactor. The cofactor is Mn(2+). Expressed at low levels in leaves.

The protein resides in the plastid. It is found in the chloroplast. The enzyme catalyses (2E)-geranyl diphosphate = alpha-pinene + diphosphate. Its pathway is secondary metabolite biosynthesis; terpenoid biosynthesis. Functionally, monoterpene synthase involved in the biosynthesis of volatile compounds widely used in aromatherapy and folk medicine, and present in culinary herbs. Mediates the conversion of (2E)-geranyl diphosphate (GPP) into alpha-pinene and, as minor compounds, into alpha-phellandrene, limonene and alpha-terpinolene. This chain is Alpha pinene synthase, chloroplastic, found in Lavandula viridis (Green lavender).